The primary structure comprises 816 residues: MASPALSHFLPRFGVAAAVAGVLSLTGCQTWNAQDTLPPTSGVQPLKGLAQNVSVRRNAMGMPLIESNSFHDALFALGYVHASDRINQMVTLRLLAQGRLAEMSGSSMLDADRYMRAVNLKKSAGELYKASSPRLKRFFEVYARGVNAYLFRYADKLPGDLASSGYKPEYWKPEDSALIFCLLNFSQSANLPEEIASLVLAQTVTNDKLAWLTPSAPDENLPLAEADKLQGIKLNGQIPGLTELSNASEQLAALNLLGTQSSNNWAIAPQRSRSGKSLLASDSHGPLAAPSLWSFVQIRAPKYQAAGVTVAGLPMVLGGFNGKVAWSLTSVLGDNQDLFLEKIRRQGSSLTYEVNGKWQPVAVRNETYFVKGQRPIREAVYETRHGALLNSTQAAAQGTGFGLALQTPSFTDDKSLDAFFDLSRAQNVERASDATREIRAIALNLVFADASNIGWQVTGRFPNRREGEGLLPSPGWEGRYDWDGYADPMLHPYDQDPAQGWLGTANQRVIPHGYGMQLSNSWAAPERGERLAELAGSGKHDSRSVIAMQYDQTTTFAAKLKKMFEAPGMAQPLKQAIDALPEAERSKAREAYTRLMAFDGKLSPTSADAAIYELFLQESMKQIFLDELGPQNSPAWKAFIANGDLSYAAQADHLLGREDSPFWDDARTPQKEDKPAILARSLAAAISAGDSQLGGDRRAWQWGKLHRYEWKNANGQSVRGPIAAGGDHTTLNTAAFAWGQDFNTTRAPSMRFIVDFGQSEPLMGQNGTGQSGNPVSPNYLNGIDPWLKGQYIGLPMQPQNFDRVYGKTRLTLTPGK.

The N-terminal stretch at 1-33 (MASPALSHFLPRFGVAAAVAGVLSLTGCQTWNA) is a signal peptide. Catalysis depends on Ser262, which acts as the Nucleophile.

The protein belongs to the peptidase S45 family. As to quaternary structure, heterodimer of an alpha subunit and a beta subunit processed from the same precursor.

Its subcellular location is the periplasm. The enzyme catalyses an N-acyl-L-homoserine lactone + H2O = L-homoserine lactone + a carboxylate. Catalyzes the deacylation of acyl-homoserine lactone (AHL or acyl-HSL), releasing homoserine lactone (HSL) and the corresponding fatty acid. Possesses a specificity for the degradation of long-chain acyl-HSLs (side chains of seven or more carbons in length). The polypeptide is Acyl-homoserine lactone acylase QuiP (quiP) (Pseudomonas fluorescens (strain Pf0-1)).